The following is a 339-amino-acid chain: RxLR effector protein SFI4 (339 aa).

The signal sequence occupies residues 1–24 (MRVLRVTFLWALLLLVAFSASVYA). The short motif at 51–74 (RGLRNSGMKLNDAKDFKGAIAKLR) is the RxLR-dEER element. TPR repeat units lie at residues 106 to 139 (AQILNDYGTVLIRAKQYDEAIEVLEDSVAMVEKI), 190 to 223 (IEASLRIAEGYKKLGNTKKNLKVLKDAVEAQNGE), 232 to 265 (AELYMELSTAHVAVGEIDDALRAAEVASAIFRQR), and 274 to 307 (AFSLNALAGVKMRQKKVDEAIKLLEQAHRIAVQI).

Belongs to the RxLR effector family.

Its subcellular location is the secreted. It localises to the host nucleus. It is found in the host cytoplasm. Its function is as follows. Effector that suppresses flg22-induced post-translational MAP kinase activation in tomato but not in Arabidopsis. The perception of highly conserved pathogen- or microbe-associated molecular patterns (PAMPs/MAMPs), such as flg22, triggers converging signaling pathways recruiting MAP kinase cascades and inducing transcriptional re-programming, yielding a generic antimicrobial response. The sequence is that of RxLR effector protein SFI4 from Phytophthora infestans (strain T30-4) (Potato late blight agent).